The following is a 115-amino-acid chain: Large ribosomal subunit protein bL19 (115 aa).

It belongs to the bacterial ribosomal protein bL19 family.

This protein is located at the 30S-50S ribosomal subunit interface and may play a role in the structure and function of the aminoacyl-tRNA binding site. The polypeptide is Large ribosomal subunit protein bL19 (Streptococcus pyogenes serotype M2 (strain MGAS10270)).